We begin with the raw amino-acid sequence, 302 residues long: N-acetyl-D-glucosamine kinase (302 aa).

ATP-binding positions include 4–11 (GFDVGGTK) and 133–140 (GFGGGLVF). Positions 157, 177, 179, and 184 each coordinate Zn(2+).

It belongs to the ROK (NagC/XylR) family. NagK subfamily.

The catalysed reaction is N-acetyl-D-glucosamine + ATP = N-acetyl-D-glucosamine 6-phosphate + ADP + H(+). It functions in the pathway cell wall biogenesis; peptidoglycan recycling. Its function is as follows. Catalyzes the phosphorylation of N-acetyl-D-glucosamine (GlcNAc) derived from cell-wall degradation, yielding GlcNAc-6-P. In Aliivibrio salmonicida (strain LFI1238) (Vibrio salmonicida (strain LFI1238)), this protein is N-acetyl-D-glucosamine kinase.